The following is a 167-amino-acid chain: Gametocyte-specific factor 1 homolog (167 aa).

CHHC U11-48K-type zinc fingers lie at residues 1 to 28 (MVYC…RVIY) and 34 to 61 (LMVC…EDRN). C4, H10, H20, C24, C37, H43, H53, and C57 together coordinate Zn(2+). Residues 128-161 (EKRRHFGEDYEEEKKPRKAKARADLRPTPYEHRR) show a composition bias toward basic and acidic residues. A disordered region spans residues 128–167 (EKRRHFGEDYEEEKKPRKAKARADLRPTPYEHRRPYSRRQ).

Belongs to the UPF0224 (FAM112) family. Interacts with piwi.

The protein resides in the nucleus. Functionally, acts via the piwi-interacting RNA (piRNA) pathway which mediates the repression of transposable elements during meiosis by forming complexes composed of piRNAs and piwi proteins and governs the methylation and subsequent repression of transposons. Required for repression of transposons and neighboring genes in ovarian somatic and germline cells. The chain is Gametocyte-specific factor 1 homolog from Drosophila melanogaster (Fruit fly).